The following is a 204-amino-acid chain: uncharacterized protein (204 aa).

Positions 1 to 17 (MKRLVTGLLALSLFLAA) are cleaved as a signal peptide. The interval 17–100 (ACGQDSDQQK…NNNQANNNQK (84 aa)) is disordered. The N-palmitoyl cysteine moiety is linked to residue Cys-18. The S-diacylglycerol cysteine moiety is linked to residue Cys-18. Residues 23 to 70 (DQQKDGNKEKDDKAKTEQQDKKTNDSSKDKKDNKDDSKDVNKDNKDNS) are compositionally biased toward basic and acidic residues. Residues 71–100 (ANDNQQQSNSNATNNDQNQTNNNQANNNQK) show a composition bias toward low complexity.

Its subcellular location is the cell membrane. This is an uncharacterized protein from Staphylococcus aureus (strain MSSA476).